We begin with the raw amino-acid sequence, 311 residues long: Purine nucleoside phosphorylase (311 aa).

Residue serine 2 is modified to N-acetylserine. Residues serine 46, histidine 81, 101 to 103, and alanine 134 each bind phosphate; that span reads RLH. An a purine D-ribonucleoside-binding site is contributed by glutamate 219. Serine 238 provides a ligand contact to phosphate. Asparagine 261 is a binding site for a purine D-ribonucleoside. Phosphoserine is present on serine 275.

This sequence belongs to the PNP/MTAP phosphorylase family.

It carries out the reaction a purine D-ribonucleoside + phosphate = a purine nucleobase + alpha-D-ribose 1-phosphate. The protein operates within purine metabolism; purine nucleoside salvage. Functionally, the purine nucleoside phosphorylases catalyze the phosphorolytic breakdown of the N-glycosidic bond in the beta-(deoxy)ribonucleoside molecules, with the formation of the corresponding free purine bases and pentose-1-phosphate. Cleaves guanosine and inosine. The chain is Purine nucleoside phosphorylase (PNP1) from Saccharomyces cerevisiae (strain ATCC 204508 / S288c) (Baker's yeast).